A 154-amino-acid chain; its full sequence is MAADPKDTTVTDENTETAATAEVETVASAPTSPAQKLSAEALIKAFETEQMKSDLPEIYVGDTVRVGVRISEGNKERVQPYEGVVISKRHGGMNQTITVRRIFQGIGVERVFMLHSPQVANIKVERRGKVRRAKLFYLRERVGKATRVKQRFDR.

A disordered region spans residues 1–33 (MAADPKDTTVTDENTETAATAEVETVASAPTSP). A compositionally biased stretch (low complexity) spans 16–27 (ETAATAEVETVA).

The protein belongs to the bacterial ribosomal protein bL19 family.

This protein is located at the 30S-50S ribosomal subunit interface and may play a role in the structure and function of the aminoacyl-tRNA binding site. In Parasynechococcus marenigrum (strain WH8102), this protein is Large ribosomal subunit protein bL19.